The primary structure comprises 168 residues: Endoribonuclease YbeY (168 aa).

Histidine 123, histidine 127, and histidine 133 together coordinate Zn(2+).

This sequence belongs to the endoribonuclease YbeY family. Requires Zn(2+) as cofactor.

It localises to the cytoplasm. In terms of biological role, single strand-specific metallo-endoribonuclease involved in late-stage 70S ribosome quality control and in maturation of the 3' terminus of the 16S rRNA. This chain is Endoribonuclease YbeY, found in Francisella tularensis subsp. tularensis (strain SCHU S4 / Schu 4).